Consider the following 159-residue polypeptide: bZIP transcription factor 11 (159 aa).

The segment covering 1–21 has biased composition (low complexity); it reads MESSSSGTTSSTIQTSSGSEE. Residues 1 to 47 form a disordered region; the sequence is MESSSSGTTSSTIQTSSGSEESLMEQRKRKRMLSNRESARRSRMKKQ. In terms of domain architecture, bZIP spans 25–88; it reads EQRKRKRMLS…LTVEAENSVL (64 aa). The basic motif stretch occupies residues 27-48; it reads RKRKRMLSNRESARRSRMKKQK. The segment at 53-67 is leucine-zipper; the sequence is LTAQVNHLKKENTEI.

As to quaternary structure, forms heterodimers with BZIP1, BZIP9, BZIP10, BZIP25 and BZIP63. Interacts with ADA2B. Highly expressed in stems and flowers. Expressed in root tips, cotyledons, leaf vasculature, embryos, apical parts of siliques and funiculi.

Its subcellular location is the nucleus. Transcription factor that binds to the DNA sequence 5'-ACTCAT-3' in target gene promoters. Promotes POX1/PRODH1 expression in response to hypoosmolarity stress. Positively regulates the expression of ASN1 and POX2/PRODH2 genes, which are involved in amino acid metabolism. Regulates several metabolic pathways such as myo-inositol, raffinose and trehalose. Regulates several trehalose metabolism genes, including TRE1, TPP5 and TPP6. Mediates recruitment of the histone acetylation machinery to activate auxin-induced transcription. Interacts with ADA2B adapter protein to promote ADA2B-mediated recruitment of SAGA-like histone acetyltransferase complexes to specific auxin-responsive genes. In Arabidopsis thaliana (Mouse-ear cress), this protein is bZIP transcription factor 11.